The sequence spans 179 residues: Large ribosomal subunit protein uL5 (179 aa).

It belongs to the universal ribosomal protein uL5 family. As to quaternary structure, part of the 50S ribosomal subunit; part of the 5S rRNA/L5/L18/L25 subcomplex. Contacts the 5S rRNA and the P site tRNA. Forms a bridge to the 30S subunit in the 70S ribosome.

Functionally, this is one of the proteins that bind and probably mediate the attachment of the 5S RNA into the large ribosomal subunit, where it forms part of the central protuberance. In the 70S ribosome it contacts protein S13 of the 30S subunit (bridge B1b), connecting the 2 subunits; this bridge is implicated in subunit movement. Contacts the P site tRNA; the 5S rRNA and some of its associated proteins might help stabilize positioning of ribosome-bound tRNAs. In Actinobacillus pleuropneumoniae serotype 5b (strain L20), this protein is Large ribosomal subunit protein uL5.